The primary structure comprises 496 residues: tRNA modification GTPase mss1, mitochondrial (496 aa).

The transit peptide at 1 to 19 (MRILNRVFLNTFQACFRRF) directs the protein to the mitochondrion. The TrmE-type G domain occupies 239 to 416 (GINVAILGPS…FLQALSSTFE (178 aa)). Residues 246 to 253 (GPSNAGKS), 293 to 297 (DTAGL), and 363 to 366 (NKVD) contribute to the GTP site.

The protein belongs to the TRAFAC class TrmE-Era-EngA-EngB-Septin-like GTPase superfamily. TrmE GTPase family.

Its subcellular location is the mitochondrion. Its function is as follows. GTPase involved in the 5-carboxymethylaminomethyl modification (mnm(5)s(2)U34) of the wobble uridine base in mitochondrial tRNAs. This Schizosaccharomyces pombe (strain 972 / ATCC 24843) (Fission yeast) protein is tRNA modification GTPase mss1, mitochondrial (mss1).